Here is a 431-residue protein sequence, read N- to C-terminus: Enolase (431 aa).

Position 167 (glutamine 167) interacts with (2R)-2-phosphoglycerate. Catalysis depends on glutamate 209, which acts as the Proton donor. Mg(2+) contacts are provided by aspartate 246, glutamate 289, and aspartate 316. (2R)-2-phosphoglycerate-binding residues include lysine 341, arginine 370, serine 371, and lysine 392. The active-site Proton acceptor is lysine 341.

This sequence belongs to the enolase family. Component of the RNA degradosome, a multiprotein complex involved in RNA processing and mRNA degradation. Requires Mg(2+) as cofactor.

It localises to the cytoplasm. Its subcellular location is the secreted. It is found in the cell surface. It catalyses the reaction (2R)-2-phosphoglycerate = phosphoenolpyruvate + H2O. It participates in carbohydrate degradation; glycolysis; pyruvate from D-glyceraldehyde 3-phosphate: step 4/5. Its function is as follows. Catalyzes the reversible conversion of 2-phosphoglycerate (2-PG) into phosphoenolpyruvate (PEP). It is essential for the degradation of carbohydrates via glycolysis. The polypeptide is Enolase (Shewanella loihica (strain ATCC BAA-1088 / PV-4)).